We begin with the raw amino-acid sequence, 297 residues long: Elongation factor Ts (297 aa).

Residues 82 to 85 form an involved in Mg(2+) ion dislocation from EF-Tu region; it reads TDFV. The segment covering 223–265 has biased composition (low complexity); the sequence is AQTAAAAETAPPEVSEPEPAAAVTAEEPTPEPVAAAEQPAEPV. The tract at residues 223–297 is disordered; that stretch reads AQTAAAAETA…GKSRSNKKKK (75 aa). A compositionally biased stretch (basic residues) spans 286–297; the sequence is SGGKSRSNKKKK.

The protein belongs to the EF-Ts family.

The protein localises to the cytoplasm. Its function is as follows. Associates with the EF-Tu.GDP complex and induces the exchange of GDP to GTP. It remains bound to the aminoacyl-tRNA.EF-Tu.GTP complex up to the GTP hydrolysis stage on the ribosome. In Thermosynechococcus vestitus (strain NIES-2133 / IAM M-273 / BP-1), this protein is Elongation factor Ts.